A 452-amino-acid chain; its full sequence is Bifunctional F420 biosynthesis protein FbiB (452 aa).

Residues 1–248 form a coenzyme F420:L-glutamate ligase region; the sequence is MVSAPGDHAG…AGEEDLFWLG (248 aa). GTP contacts are provided by residues 24-27, S54, and K59; that span reads LPEF. D113 provides a ligand contact to a divalent metal cation. N116 contributes to the GTP binding site. 2 residues coordinate a divalent metal cation: D154 and T155. The tract at residues 249–452 is dehydro-coenzyme F420-0 reductase; the sequence is TAEAVERGRR…RDPGDGLVER (204 aa). Residues 264 to 268 and A292 contribute to the FMN site; that span reads RRSVR. D324 is a coenzyme F420-(gamma-Glu)n binding site. FMN contacts are provided by G403 and R440.

It in the N-terminal section; belongs to the CofE family. Requires Mg(2+) as cofactor. It depends on Mn(2+) as a cofactor. K(+) is required as a cofactor.

The enzyme catalyses oxidized coenzyme F420-0 + GTP + L-glutamate = oxidized coenzyme F420-1 + GDP + phosphate + H(+). It carries out the reaction oxidized coenzyme F420-0 + FMN + H(+) = dehydro coenzyme F420-0 + FMNH2. The catalysed reaction is oxidized coenzyme F420-1 + GTP + L-glutamate = oxidized coenzyme F420-2 + GDP + phosphate + H(+). It functions in the pathway cofactor biosynthesis; coenzyme F420 biosynthesis. Functionally, bifunctional enzyme that catalyzes the GTP-dependent successive addition of two or more gamma-linked L-glutamates to the L-lactyl phosphodiester of 7,8-didemethyl-8-hydroxy-5-deazariboflavin (F420-0) to form polyglutamated F420 derivatives, and the FMNH2-dependent reduction of dehydro-F420-0 to form F420-0. In Nocardia farcinica (strain IFM 10152), this protein is Bifunctional F420 biosynthesis protein FbiB.